The primary structure comprises 227 residues: Cytochrome c oxidase subunit 2 (227 aa).

Topologically, residues 1-14 (MAYPFELGFQDATS) are mitochondrial intermembrane. A helical transmembrane segment spans residues 15–45 (PIMEELLHFHDHTLMIVFLISSLVLYIISLM). The Mitochondrial matrix portion of the chain corresponds to 46–59 (LTTKLTHTSTMDAQ). Residues 60 to 87 (EVETIWTILPAIILILIALPSLRILYMM) traverse the membrane as a helical segment. Residues 88–227 (DEINDPSLTV…HFENWSSSML (140 aa)) are Mitochondrial intermembrane-facing. Residues His-161, Cys-196, Glu-198, Cys-200, His-204, and Met-207 each contribute to the Cu cation site. Glu-198 contributes to the Mg(2+) binding site.

The protein belongs to the cytochrome c oxidase subunit 2 family. As to quaternary structure, component of the cytochrome c oxidase (complex IV, CIV), a multisubunit enzyme composed of 14 subunits. The complex is composed of a catalytic core of 3 subunits MT-CO1, MT-CO2 and MT-CO3, encoded in the mitochondrial DNA, and 11 supernumerary subunits COX4I, COX5A, COX5B, COX6A, COX6B, COX6C, COX7A, COX7B, COX7C, COX8 and NDUFA4, which are encoded in the nuclear genome. The complex exists as a monomer or a dimer and forms supercomplexes (SCs) in the inner mitochondrial membrane with NADH-ubiquinone oxidoreductase (complex I, CI) and ubiquinol-cytochrome c oxidoreductase (cytochrome b-c1 complex, complex III, CIII), resulting in different assemblies (supercomplex SCI(1)III(2)IV(1) and megacomplex MCI(2)III(2)IV(2)). Found in a complex with TMEM177, COA6, COX18, COX20, SCO1 and SCO2. Interacts with TMEM177 in a COX20-dependent manner. Interacts with COX20. Interacts with COX16. Requires Cu cation as cofactor.

It localises to the mitochondrion inner membrane. The enzyme catalyses 4 Fe(II)-[cytochrome c] + O2 + 8 H(+)(in) = 4 Fe(III)-[cytochrome c] + 2 H2O + 4 H(+)(out). In terms of biological role, component of the cytochrome c oxidase, the last enzyme in the mitochondrial electron transport chain which drives oxidative phosphorylation. The respiratory chain contains 3 multisubunit complexes succinate dehydrogenase (complex II, CII), ubiquinol-cytochrome c oxidoreductase (cytochrome b-c1 complex, complex III, CIII) and cytochrome c oxidase (complex IV, CIV), that cooperate to transfer electrons derived from NADH and succinate to molecular oxygen, creating an electrochemical gradient over the inner membrane that drives transmembrane transport and the ATP synthase. Cytochrome c oxidase is the component of the respiratory chain that catalyzes the reduction of oxygen to water. Electrons originating from reduced cytochrome c in the intermembrane space (IMS) are transferred via the dinuclear copper A center (CU(A)) of subunit 2 and heme A of subunit 1 to the active site in subunit 1, a binuclear center (BNC) formed by heme A3 and copper B (CU(B)). The BNC reduces molecular oxygen to 2 water molecules using 4 electrons from cytochrome c in the IMS and 4 protons from the mitochondrial matrix. This Tamias amoenus (Yellow-pine chipmunk) protein is Cytochrome c oxidase subunit 2 (MT-CO2).